The following is a 648-amino-acid chain: Threonine--tRNA ligase (648 aa).

Residues 1 to 61 (MIKITLPDGS…TTDGSLVLYT (61 aa)) enclose the TGS domain. Positions 240–539 (DHRKLGKELE…LLEHTAGNFP (300 aa)) are catalytic. Zn(2+)-binding residues include Cys335, His386, and His516.

Belongs to the class-II aminoacyl-tRNA synthetase family. As to quaternary structure, homodimer. Zn(2+) serves as cofactor.

It is found in the cytoplasm. It carries out the reaction tRNA(Thr) + L-threonine + ATP = L-threonyl-tRNA(Thr) + AMP + diphosphate + H(+). Catalyzes the attachment of threonine to tRNA(Thr) in a two-step reaction: L-threonine is first activated by ATP to form Thr-AMP and then transferred to the acceptor end of tRNA(Thr). Also edits incorrectly charged L-seryl-tRNA(Thr). This Flavobacterium psychrophilum (strain ATCC 49511 / DSM 21280 / CIP 103535 / JIP02/86) protein is Threonine--tRNA ligase.